The primary structure comprises 410 residues: Imidazolonepropionase (410 aa).

2 residues coordinate Fe(3+): His-73 and His-75. Residues His-73 and His-75 each contribute to the Zn(2+) site. Arg-82, Tyr-145, and His-178 together coordinate 4-imidazolone-5-propanoate. Tyr-145 contacts N-formimidoyl-L-glutamate. Residue His-243 participates in Fe(3+) binding. His-243 is a binding site for Zn(2+). Gln-246 contributes to the 4-imidazolone-5-propanoate binding site. Fe(3+) is bound at residue Asp-318. Position 318 (Asp-318) interacts with Zn(2+). N-formimidoyl-L-glutamate contacts are provided by Asn-320 and Gly-322. Residue Ser-323 coordinates 4-imidazolone-5-propanoate.

This sequence belongs to the metallo-dependent hydrolases superfamily. HutI family. Zn(2+) serves as cofactor. Requires Fe(3+) as cofactor.

The protein localises to the cytoplasm. It carries out the reaction 4-imidazolone-5-propanoate + H2O = N-formimidoyl-L-glutamate. It participates in amino-acid degradation; L-histidine degradation into L-glutamate; N-formimidoyl-L-glutamate from L-histidine: step 3/3. Its function is as follows. Catalyzes the hydrolytic cleavage of the carbon-nitrogen bond in imidazolone-5-propanoate to yield N-formimidoyl-L-glutamate. It is the third step in the universal histidine degradation pathway. The sequence is that of Imidazolonepropionase from Shewanella frigidimarina (strain NCIMB 400).